A 275-amino-acid chain; its full sequence is MALKTFKPTTPGRRQLVLVDRSELWKGKPEKSLTEGLRSKGGRNNTGRVTVRWRGGGHKRRYRIIDFKRNKFDVAATVERLEYDPNRTAFIALVSYADGEKAYIIAPQRLAVGDQVIASEKADIKPGNAMPLKNIPVGTIVHNVELKVGKGGQLARSAGTYVQLVGKDQGYAQLRLASGELRMVRGECMATIGAVSNPDQQNVSLGKAGRAVWMGRRPSVRGVAMNPIDHPHGGGEGRTSGGRHPVTPWGKPTKGKKTRSNKKTDRLIMRRRQTQ.

A disordered region spans residues 225 to 275 (MNPIDHPHGGGEGRTSGGRHPVTPWGKPTKGKKTRSNKKTDRLIMRRRQTQ).

Belongs to the universal ribosomal protein uL2 family. Part of the 50S ribosomal subunit. Forms a bridge to the 30S subunit in the 70S ribosome.

In terms of biological role, one of the primary rRNA binding proteins. Required for association of the 30S and 50S subunits to form the 70S ribosome, for tRNA binding and peptide bond formation. It has been suggested to have peptidyltransferase activity; this is somewhat controversial. Makes several contacts with the 16S rRNA in the 70S ribosome. The sequence is that of Large ribosomal subunit protein uL2 from Paramagnetospirillum magneticum (strain ATCC 700264 / AMB-1) (Magnetospirillum magneticum).